Consider the following 314-residue polypeptide: Protoheme IX farnesyltransferase (314 aa).

The next 8 helical transmembrane spans lie at 31-51 (VMSL…GHFH), 52-72 (PVLA…SGAL), 119-139 (ILVN…YVVI), 152-172 (IVIG…AVTG), 179-199 (LLLF…LALF), 225-245 (ILLY…LGYF), 247-267 (AVYG…AINV), and 284-304 (FAFS…EVVF).

This sequence belongs to the UbiA prenyltransferase family. Protoheme IX farnesyltransferase subfamily.

It is found in the cell inner membrane. It carries out the reaction heme b + (2E,6E)-farnesyl diphosphate + H2O = Fe(II)-heme o + diphosphate. It functions in the pathway porphyrin-containing compound metabolism; heme O biosynthesis; heme O from protoheme: step 1/1. Functionally, converts heme B (protoheme IX) to heme O by substitution of the vinyl group on carbon 2 of heme B porphyrin ring with a hydroxyethyl farnesyl side group. This Bradyrhizobium diazoefficiens (strain JCM 10833 / BCRC 13528 / IAM 13628 / NBRC 14792 / USDA 110) protein is Protoheme IX farnesyltransferase.